The sequence spans 1214 residues: Reverse gyrase (1214 aa).

The RG N-terminal-type zinc-finger motif lies at Met-1–Met-37. Positions 9, 12, 27, and 30 each coordinate Zn(2+). ATP contacts are provided by residues Gln-89 and Ala-106–Ser-113. The 160-residue stretch at Val-93–Leu-252 folds into the Helicase ATP-binding domain. The short motif at Asp-213–Asp-216 is the DEAD box element. A topoisomerase I region spans residues Asp-635–Ser-1214. The 164-residue stretch at Ser-639–Val-802 folds into the Toprim domain. Glu-645 provides a ligand contact to Mg(2+). Residues Ile-719–Asp-748 form an RG C-terminal-type zinc finger. Zn(2+)-binding residues include Cys-722, Cys-725, Cys-738, and Cys-741. Mg(2+) is bound at residue Asp-771. The 395-residue stretch at Asn-818–Val-1212 folds into the Topo IA-type catalytic domain. Tyr-955 acts as the O-(5'-phospho-DNA)-tyrosine intermediate in catalysis.

It in the N-terminal section; belongs to the DEAD box helicase family. DDVD subfamily. In the C-terminal section; belongs to the type IA topoisomerase family. As to quaternary structure, monomer. It depends on Zn(2+) as a cofactor. Requires Mg(2+) as cofactor.

It is found in the cytoplasm. The catalysed reaction is ATP + H2O = ADP + phosphate + H(+). Its function is as follows. Modifies the topological state of DNA by introducing positive supercoils in an ATP-dependent process. Increases the linking number in steps of +1. Binds to single-stranded DNA, transiently cleaves and then rejoins the ends, introducing a positive supercoil in the process. The scissile phosphodiester is attacked by the catalytic tyrosine of the enzyme, resulting in the formation of a DNA-(5'-phosphotyrosyl)-enzyme intermediate. Probably involved in rewinding DNA strands in regions of the chromosome that have opened up to allow replication, transcription, DNA repair and/or for DNA protection. In Pyrococcus furiosus (strain ATCC 43587 / DSM 3638 / JCM 8422 / Vc1), this protein is Reverse gyrase.